The following is a 223-amino-acid chain: Deoxyribose-phosphate aldolase (223 aa).

Catalysis depends on Asp91, which acts as the Proton donor/acceptor. The active-site Schiff-base intermediate with acetaldehyde is the Lys153. The active-site Proton donor/acceptor is Lys182.

This sequence belongs to the DeoC/FbaB aldolase family. DeoC type 1 subfamily.

Its subcellular location is the cytoplasm. The enzyme catalyses 2-deoxy-D-ribose 5-phosphate = D-glyceraldehyde 3-phosphate + acetaldehyde. It participates in carbohydrate degradation; 2-deoxy-D-ribose 1-phosphate degradation; D-glyceraldehyde 3-phosphate and acetaldehyde from 2-deoxy-alpha-D-ribose 1-phosphate: step 2/2. Its function is as follows. Catalyzes a reversible aldol reaction between acetaldehyde and D-glyceraldehyde 3-phosphate to generate 2-deoxy-D-ribose 5-phosphate. This chain is Deoxyribose-phosphate aldolase, found in Streptococcus pyogenes serotype M1.